A 258-amino-acid chain; its full sequence is Mediator of RNA polymerase II transcription subunit 4 (258 aa).

Positions 52–101 (FRKMLELAEEQAKVEEAMDQLRAKVEVHDREIQKLQKSLKDAELILSTAI) form a coiled coil. 2 disordered regions span residues 164–208 (GKSE…EVPN) and 234–258 (LETRAQDDVEVMSTDSSSSSSSDSQ). Over residues 166–190 (SEQNINGGTVTHQNSGMPSEQQRTL) the composition is skewed to polar residues. The span at 194-204 (AGSGSGSGAGG) shows a compositional bias: gly residues. The span at 246 to 258 (STDSSSSSSSDSQ) shows a compositional bias: low complexity.

It belongs to the Mediator complex subunit 4 family. As to quaternary structure, component of the Mediator complex, which includes at least MED4, MED6, MED14, MED17, MED18, MED20, MED21, MED23, MED24, MED27, MED30 and MED31. Interacts with MED10 and MED21.

It localises to the nucleus. In terms of biological role, component of the Mediator complex, a coactivator involved in the regulated transcription of nearly all RNA polymerase II-dependent genes. Mediator functions as a bridge to convey information from gene-specific regulatory proteins to the basal RNA polymerase II transcription machinery. Mediator is recruited to promoters by direct interactions with regulatory proteins and serves as a scaffold for the assembly of a functional preinitiation complex with RNA polymerase II and the general transcription factors. Required for activated transcription of the MtnA, MtnB and MtnD genes. The polypeptide is Mediator of RNA polymerase II transcription subunit 4 (MED4) (Drosophila melanogaster (Fruit fly)).